Consider the following 692-residue polypeptide: 5-taurinomethyluridine-[tRNA] synthase subunit MTO1, mitochondrial (692 aa).

A mitochondrion-targeting transit peptide spans 1 to 25 (MFYFRGCGRWVAASFTKLQFPLARL). FAD-binding positions include 43-48 (GGGHAG), V155, S218, and Q407. K508 bears the N6-methyllysine mark.

It belongs to the MnmG family. In terms of assembly, homodimer; forms a dimer in the presence of potassium. Interacts with GTPBP3; forms the GTPBP3-MTO1 complex composed of homodimers of GTPBP3 and MTO1. The cofactor is FAD.

It localises to the mitochondrion. The catalysed reaction is 5,10-methylenetetrahydrofolate + uridine(34) in tRNA + taurine + GTP + A + H2O = 5-taurinomethyluridine(34) in tRNA + 7,8-dihydrofolate + GDP + AH2 + phosphate + H(+). In terms of biological role, component of the GTPBP3-MTO1 complex that catalyzes the 5-taurinomethyluridine (taum(5)U) modification at the 34th wobble position (U34) of mitochondrial tRNAs (mt-tRNAs), which plays a role in mt-tRNA decoding and mitochondrial translation. Taum(5)U formation on mammalian mt-tRNA requires the presence of both GTPBP3-mediated GTPase activity and MTO1 catalytic activity. This chain is 5-taurinomethyluridine-[tRNA] synthase subunit MTO1, mitochondrial (MTO1), found in Pongo abelii (Sumatran orangutan).